The sequence spans 616 residues: MALLSVAPLQKPLTSCSPFSTTMPTLGVCTPRKVVTPSIIMCSTTAVSDAGAKRRIANHHSNLWGDDFIHSLSTHYEAPSYRERAERLIKEVKEMFTEIEDGLSITPLSDLLSRLSMVDSIERLGIDRHFKMEIKSALDYVHSYWSEKGIGCGRESGVTDLNSTALGLRTLRLHGYPVSSSVLEQFKDEKGQFATSSIQTDGGEIRSIFNLFRASLVAFPNEKVMEDAQIFSTIYLKEYLEKIPLSSLSRQIEYVMEYGWHTNLPRLEARHYMDVFGYNEMPWMSYGNTEKLLELAKLEFNIFHSIQQRELKHISRWWKDSGFSQMNFVRHRHVEYYTLASCFAIDPQHSAFRVSFAKMCHLVTVLDDIYDTFGTMEELQLFTAAVKRWDPSATDSLPEYMKRVYTVLYETVNEMAQVAKKSQGRDTINYARHAWEAYLDSYMKEAEWISTGCLPTFEEYYENGKISFGYRISMLQPILSMDIPFPHHILQEIDYPSRFSSLAAGILRLKGDTRCYQADSARGEEASCISCYMKENPGLTEEDVVNHIHGMVDDLIKELNWELLKPDCNVPISSKKHAFDICRAVHHGYKYRDGYSVATNEIKDLVMITVLEPVPL.

Residues 1–41 constitute a chloroplast transit peptide; sequence MALLSVAPLQKPLTSCSPFSTTMPTLGVCTPRKVVTPSIIM. Mg(2+) contacts are provided by Asp-367, Asp-371, and Asp-519. The short motif at 367–371 is the DDXXD motif element; it reads DDIYD.

It belongs to the terpene synthase family. Tpsd subfamily. Mg(2+) serves as cofactor. Requires Mn(2+) as cofactor.

The protein resides in the plastid. It localises to the chloroplast. It catalyses the reaction (2E)-geranyl diphosphate + H2O = (S)-alpha-terpineol + diphosphate. The enzyme catalyses (2E)-geranyl diphosphate + H2O = 1,8-cineole + diphosphate. It carries out the reaction (2E)-geranyl diphosphate = beta-myrcene + diphosphate. The catalysed reaction is (2E)-geranyl diphosphate = (1S,5S)-sabinene + diphosphate. It functions in the pathway terpene metabolism; oleoresin biosynthesis. It participates in secondary metabolite biosynthesis; terpenoid biosynthesis. Monoterpene synthase (TPS) involved in the biosynthesis of monoterpene natural products included in conifer oleoresin secretions and volatile emissions; these compounds contribute to biotic and abiotic stress defense against herbivores and pathogens. Catalyzes the conversion of (2E)-geranyl diphosphate (GPP) to alpha-terpineol and, to a lower extent, to 1,8-cineole, myrcene and (-)-sabinene. This Pinus contorta (Shore pine) protein is Alpha terpineol synthase, chloroplastic.